An 893-amino-acid chain; its full sequence is Translation initiation factor IF-2 (893 aa).

Disordered stretches follow at residues 135 to 169 (KAKA…KAEE) and 201 to 300 (ENEK…ESMD). Residues 201-224 (ENEKRWAEEEKARKEAEKTVDHHV) are compositionally biased toward basic and acidic residues. Residues 251–265 (PSANAGNNANANAGA) show a composition bias toward low complexity. The region spanning 393-562 (SRAPVVTIMG…LLEAEVLELK (170 aa)) is the tr-type G domain. The segment at 402 to 409 (GHVDHGKT) is G1. 402–409 (GHVDHGKT) is a GTP binding site. The G2 stretch occupies residues 427–431 (GITQH). Residues 448–451 (DTPG) form a G3 region. GTP contacts are provided by residues 448–452 (DTPGH) and 502–505 (NKMD). A G4 region spans residues 502 to 505 (NKMD). Residues 538-540 (SAK) are G5.

Belongs to the TRAFAC class translation factor GTPase superfamily. Classic translation factor GTPase family. IF-2 subfamily.

The protein localises to the cytoplasm. Its function is as follows. One of the essential components for the initiation of protein synthesis. Protects formylmethionyl-tRNA from spontaneous hydrolysis and promotes its binding to the 30S ribosomal subunits. Also involved in the hydrolysis of GTP during the formation of the 70S ribosomal complex. The polypeptide is Translation initiation factor IF-2 (Shewanella halifaxensis (strain HAW-EB4)).